The following is a 214-amino-acid chain: MASLKSIIRQGKQRRSDLTAIRNSGKVPAVMYGYGQKNVSVKVDEVEFIKVIREVGRNGVIDLGVGSKTIKVMVADYQFDPLKNQITHIDFLAINMSEERTVEVPVHLVGEAVGAKEGGVVDQPLFNLEVTATPENIPEYLEVEISGLEIGDSLSVADLNTTGDFTIENEPEATVVTVVPPTQGPSEAEIEEVEAGDADTPEPEVVGEKEEDEE.

Residues 179–214 (VPPTQGPSEAEIEEVEAGDADTPEPEVVGEKEEDEE) are disordered. The span at 188-202 (AEIEEVEAGDADTPE) shows a compositional bias: acidic residues.

This sequence belongs to the bacterial ribosomal protein bL25 family. CTC subfamily. As to quaternary structure, part of the 50S ribosomal subunit; part of the 5S rRNA/L5/L18/L25 subcomplex. Contacts the 5S rRNA. Binds to the 5S rRNA independently of L5 and L18.

In terms of biological role, this is one of the proteins that binds to the 5S RNA in the ribosome where it forms part of the central protuberance. In Staphylococcus carnosus (strain TM300), this protein is Large ribosomal subunit protein bL25.